A 454-amino-acid chain; its full sequence is CBL-interacting protein kinase 4 (454 aa).

Positions 25–284 (YELGRMLGRG…ESLAAHHPWF (260 aa)) constitute a Protein kinase domain. ATP-binding positions include 31–39 (LGRGTFAKV) and Lys54. The active-site Proton acceptor is the Asp151. An activation loop region spans residues 169–198 (DFGLAALPDTLRDDGRLHTACGTPAYAAPE). Residues 311–335 (APPPPLNAFDIISMSPGLDLSGLFG) form the NAF domain. Residues 341 to 370 (LREKRFTTTASPEKTLEQLGLAGGKLGYVV) form a PPI region.

It belongs to the protein kinase superfamily. CAMK Ser/Thr protein kinase family. SNF1 subfamily. The cofactor is Mn(2+).

It catalyses the reaction L-seryl-[protein] + ATP = O-phospho-L-seryl-[protein] + ADP + H(+). It carries out the reaction L-threonyl-[protein] + ATP = O-phospho-L-threonyl-[protein] + ADP + H(+). Its function is as follows. CIPK serine-threonine protein kinases interact with CBL proteins. Binding of a CBL protein to the regulatory NAF domain of CIPK protein lead to the activation of the kinase in a calcium-dependent manner. The polypeptide is CBL-interacting protein kinase 4 (CIPK4) (Oryza sativa subsp. japonica (Rice)).